Reading from the N-terminus, the 54-residue chain is Ovomucoid (54 aa).

Positions Val-4–Cys-54 constitute a Kazal-like domain. Disulfide bonds link Cys-6–Cys-36, Cys-14–Cys-33, and Cys-22–Cys-54. Asn-43 carries an N-linked (GlcNAc...) asparagine glycan.

The protein resides in the secreted. The protein is Ovomucoid of Anser canagicus (Emperor goose).